The primary structure comprises 1028 residues: Beta-galactosidase (1028 aa).

Residues Asn104 and Asp203 each contribute to the substrate site. Asp203 contacts Na(+). Residues Glu418, His420, and Glu463 each coordinate Mg(2+). Substrate-binding positions include Glu463 and 539–542 (EYAH). The active-site Proton donor is the Glu463. Glu539 serves as the catalytic Nucleophile. Residue Asn599 participates in Mg(2+) binding. 2 residues coordinate Na(+): Phe603 and Asn606. Substrate-binding residues include Asn606 and Trp1004.

It belongs to the glycosyl hydrolase 2 family. In terms of assembly, homotetramer. Requires Mg(2+) as cofactor. The cofactor is Na(+).

The enzyme catalyses Hydrolysis of terminal non-reducing beta-D-galactose residues in beta-D-galactosides.. This Enterobacter sp. (strain 638) protein is Beta-galactosidase.